The chain runs to 96 residues: Auxin-responsive protein SAUR29 (96 aa).

It belongs to the ARG7 family.

It localises to the cell membrane. Functions as a positive effector of cell expansion through modulation of auxin transport. Involved in thermo-responsiveness of plant architecture. Enhances plasma membrane H(+)-ATPase. The polypeptide is Auxin-responsive protein SAUR29 (Arabidopsis thaliana (Mouse-ear cress)).